The sequence spans 438 residues: GTPase Der (438 aa).

EngA-type G domains follow at residues 4 to 169 (PVVA…PEKG) and 178 to 353 (IDVA…DQNS). GTP contacts are provided by residues 10–17 (GRPNVGKS), 57–61 (DTGGI), 120–123 (NKVD), 184–191 (GKPNVGKS), 231–235 (DTAGL), and 296–299 (NKWD). The 85-residue stretch at 354–438 (RRVKTGLLNE…PIRLKFKQKT (85 aa)) folds into the KH-like domain.

This sequence belongs to the TRAFAC class TrmE-Era-EngA-EngB-Septin-like GTPase superfamily. EngA (Der) GTPase family. As to quaternary structure, associates with the 50S ribosomal subunit.

GTPase that plays an essential role in the late steps of ribosome biogenesis. The polypeptide is GTPase Der (Halothermothrix orenii (strain H 168 / OCM 544 / DSM 9562)).